The following is a 371-amino-acid chain: Protein MxiG (371 aa).

Residues 127 to 141 (VFFFFAVIVVLIIIF) form a helical membrane-spanning segment.

It localises to the cell inner membrane. Its subcellular location is the cell outer membrane. Its function is as follows. Involved in the secretion of the Ipa antigens. Involved in the intracellular dissemination of Shigella. Part of the Mxi-Spa secretion apparatus. This Shigella flexneri protein is Protein MxiG (mxiG).